A 145-amino-acid polypeptide reads, in one-letter code: Large ribosomal subunit protein uL14m (145 aa).

Residues 1-30 (MAVLTGLFGFFAYVRGAVSQRCFSTSGSLS) constitute a mitochondrion transit peptide.

It belongs to the universal ribosomal protein uL14 family. Component of the mitochondrial ribosome large subunit (39S) which comprises a 16S rRNA and about 50 distinct proteins. Interacts with MALSU1.

The protein resides in the mitochondrion. Functionally, may form part of 2 intersubunit bridges in the assembled ribosome. Upon binding to MALSU1, intersubunit bridge formation is blocked, preventing ribosome formation and repressing translation. The sequence is that of Large ribosomal subunit protein uL14m (Mrpl14) from Rattus norvegicus (Rat).